The sequence spans 183 residues: Calcineurin subunit B type 2 (183 aa).

Glycine 2 carries N-myristoyl glycine lipidation. EF-hand domains lie at 25 to 60, 64 to 92, 94 to 129, and 135 to 170; these read REIK…SMNP, RIIS…FHPK, DKAD…MVGS, and QISS…SGCN. The Ca(2+) site is built by aspartate 107, asparagine 109, aspartate 111, and glutamate 118.

The protein belongs to the calcineurin regulatory subunit family. As to quaternary structure, calcineurin is composed of a catalytic subunit (A) and a regulatory subunit (B).

In terms of biological role, regulatory subunit of calcineurin, a calcium-dependent, calmodulin stimulated protein phosphatase. Confers calcium sensitivity. The sequence is that of Calcineurin subunit B type 2 (cnbB) from Dictyostelium discoideum (Social amoeba).